Consider the following 120-residue polypeptide: Ribonuclease P protein component 2 (120 aa).

The protein belongs to the eukaryotic/archaeal RNase P protein component 2 family. In terms of assembly, consists of a catalytic RNA component and at least 4-5 protein subunits.

The protein localises to the cytoplasm. It carries out the reaction Endonucleolytic cleavage of RNA, removing 5'-extranucleotides from tRNA precursor.. Functionally, part of ribonuclease P, a protein complex that generates mature tRNA molecules by cleaving their 5'-ends. The protein is Ribonuclease P protein component 2 of Thermococcus kodakarensis (strain ATCC BAA-918 / JCM 12380 / KOD1) (Pyrococcus kodakaraensis (strain KOD1)).